The chain runs to 71 residues: Large ribosomal subunit protein bL31 (71 aa).

4 residues coordinate Zn(2+): cysteine 16, cysteine 18, cysteine 36, and cysteine 39.

This sequence belongs to the bacterial ribosomal protein bL31 family. Type A subfamily. In terms of assembly, part of the 50S ribosomal subunit. Requires Zn(2+) as cofactor.

Functionally, binds the 23S rRNA. The polypeptide is Large ribosomal subunit protein bL31 (Thermotoga sp. (strain RQ2)).